A 122-amino-acid polypeptide reads, in one-letter code: uncharacterized protein (122 aa).

The next 2 membrane-spanning stretches (helical) occupy residues 43-63 (PIII…IFFI) and 76-96 (AVAD…ILYF).

The protein localises to the membrane. This is an uncharacterized protein from Schizosaccharomyces pombe (strain 972 / ATCC 24843) (Fission yeast).